The following is a 430-amino-acid chain: Adenylosuccinate synthetase (430 aa).

Residues 12–18 (GDEGKGK) and 40–42 (GHT) each bind GTP. Asp13 functions as the Proton acceptor in the catalytic mechanism. Residues Asp13 and Gly40 each coordinate Mg(2+). IMP is bound by residues 13–16 (DEGK), 38–41 (NAGH), Thr128, Arg142, Gln223, Thr238, and Arg302. His41 (proton donor) is an active-site residue. 298 to 304 (TTTGRPR) contributes to the substrate binding site. Residues Arg304, 330–332 (CID), and 412–414 (SVG) each bind GTP.

This sequence belongs to the adenylosuccinate synthetase family. As to quaternary structure, homodimer. Mg(2+) serves as cofactor.

The protein resides in the cytoplasm. It catalyses the reaction IMP + L-aspartate + GTP = N(6)-(1,2-dicarboxyethyl)-AMP + GDP + phosphate + 2 H(+). It functions in the pathway purine metabolism; AMP biosynthesis via de novo pathway; AMP from IMP: step 1/2. Its function is as follows. Plays an important role in the de novo pathway of purine nucleotide biosynthesis. Catalyzes the first committed step in the biosynthesis of AMP from IMP. This is Adenylosuccinate synthetase from Streptococcus thermophilus (strain CNRZ 1066).